The chain runs to 276 residues: Diaminopimelate epimerase (276 aa).

The substrate site is built by asparagine 13, glutamine 46, and asparagine 66. Cysteine 75 (proton donor) is an active-site residue. Substrate-binding positions include 76–77 (GN), asparagine 159, asparagine 192, and 210–211 (ER). Residue cysteine 219 is the Proton acceptor of the active site. 220 to 221 (GT) lines the substrate pocket.

It belongs to the diaminopimelate epimerase family. Homodimer.

It localises to the cytoplasm. The enzyme catalyses (2S,6S)-2,6-diaminopimelate = meso-2,6-diaminopimelate. It functions in the pathway amino-acid biosynthesis; L-lysine biosynthesis via DAP pathway; DL-2,6-diaminopimelate from LL-2,6-diaminopimelate: step 1/1. In terms of biological role, catalyzes the stereoinversion of LL-2,6-diaminopimelate (L,L-DAP) to meso-diaminopimelate (meso-DAP), a precursor of L-lysine and an essential component of the bacterial peptidoglycan. In Aeromonas hydrophila subsp. hydrophila (strain ATCC 7966 / DSM 30187 / BCRC 13018 / CCUG 14551 / JCM 1027 / KCTC 2358 / NCIMB 9240 / NCTC 8049), this protein is Diaminopimelate epimerase.